The primary structure comprises 86 residues: Small ribosomal subunit protein bS20 (86 aa).

It belongs to the bacterial ribosomal protein bS20 family.

Functionally, binds directly to 16S ribosomal RNA. The sequence is that of Small ribosomal subunit protein bS20 from Pelagibacter ubique (strain HTCC1062).